The chain runs to 151 residues: RNA polymerase-binding transcription factor DksA (151 aa).

Positions 33–54 (NEAQLAHFRRILEAWRNQLRDE) form a coiled coil. Zn(2+) contacts are provided by Cys114, Cys117, Cys135, and Cys138. Residues 114–138 (CESCGVEIGIRRLEARPTADLCIDC) form a dksA C4-type zinc finger.

The protein belongs to the DksA family. Interacts directly with the RNA polymerase.

It localises to the cytoplasm. In terms of biological role, transcription factor that acts by binding directly to the RNA polymerase (RNAP). Required for negative regulation of rRNA expression and positive regulation of several amino acid biosynthesis promoters. Also required for regulation of fis expression. This chain is RNA polymerase-binding transcription factor DksA, found in Escherichia coli O157:H7.